We begin with the raw amino-acid sequence, 413 residues long: Phosphopentomutase (413 aa).

Mn(2+) contacts are provided by Asp-11, Asp-306, His-311, Asp-347, His-348, and His-359.

This sequence belongs to the phosphopentomutase family. It depends on Mn(2+) as a cofactor.

It localises to the cytoplasm. It carries out the reaction 2-deoxy-alpha-D-ribose 1-phosphate = 2-deoxy-D-ribose 5-phosphate. It catalyses the reaction alpha-D-ribose 1-phosphate = D-ribose 5-phosphate. Its pathway is carbohydrate degradation; 2-deoxy-D-ribose 1-phosphate degradation; D-glyceraldehyde 3-phosphate and acetaldehyde from 2-deoxy-alpha-D-ribose 1-phosphate: step 1/2. Isomerase that catalyzes the conversion of deoxy-ribose 1-phosphate (dRib-1-P) and ribose 1-phosphate (Rib-1-P) to deoxy-ribose 5-phosphate (dRib-5-P) and ribose 5-phosphate (Rib-5-P), respectively. This chain is Phosphopentomutase, found in Helicobacter pylori (strain HPAG1).